A 252-amino-acid polypeptide reads, in one-letter code: 2-succinyl-6-hydroxy-2,4-cyclohexadiene-1-carboxylate synthase (252 aa).

This sequence belongs to the AB hydrolase superfamily. MenH family. Monomer.

It catalyses the reaction 5-enolpyruvoyl-6-hydroxy-2-succinyl-cyclohex-3-ene-1-carboxylate = (1R,6R)-6-hydroxy-2-succinyl-cyclohexa-2,4-diene-1-carboxylate + pyruvate. It participates in quinol/quinone metabolism; 1,4-dihydroxy-2-naphthoate biosynthesis; 1,4-dihydroxy-2-naphthoate from chorismate: step 3/7. Its pathway is quinol/quinone metabolism; menaquinone biosynthesis. Catalyzes a proton abstraction reaction that results in 2,5-elimination of pyruvate from 2-succinyl-5-enolpyruvyl-6-hydroxy-3-cyclohexene-1-carboxylate (SEPHCHC) and the formation of 2-succinyl-6-hydroxy-2,4-cyclohexadiene-1-carboxylate (SHCHC). In Escherichia coli O157:H7, this protein is 2-succinyl-6-hydroxy-2,4-cyclohexadiene-1-carboxylate synthase.